The primary structure comprises 947 residues: Netrin receptor unc-5 (947 aa).

The region spanning 43–141 (VIRNKPLRLQ…VHLAYMRKHF (99 aa)) is the Ig-like domain. 5 cysteine pairs are disulfide-bonded: C53–C112, C160–C209, C243–C295, C247–C299, and C273–C285. One can recognise an Ig-like C2-type domain in the interval 139-226 (KHFLKSPVAQ…SRKTDPVEVQ (88 aa)). The N-linked (GlcNAc...) asparagine glycan is linked to N206. TSP type-1 domains lie at 230 to 300 (DGGW…VPCK) and 302 to 354 (DGGW…QLCT). Residues W305 and W308 are each glycosylated (C-linked (Man) tryptophan). Residues 369-389 (GSVASIFIVASFILAILAMFC) form a helical membrane-spanning segment. The Cytoplasmic segment spans residues 390 to 947 (CKRGNSKKSK…LSAFPQIVSP (558 aa)). Y510 bears the Phosphotyrosine mark. The 129-residue stretch at 530–658 (NIVAAQIDSN…LNTNMFVQFE (129 aa)) folds into the ZU5 domain. Positions 857–938 (ELARLLDMPN…DAVMVLERFL (82 aa)) constitute a Death domain.

Belongs to the unc-5 family. Interacts (via cytoplasmic domain) with src-1 (via SH2 domain and SH3 domain). Interacts with madd-4. Interacts with unc-129; the interaction is direct. Post-translationally, phosphorylated on different cytoplasmic tyrosine residues. May be phosphorylated on tyrosine residues by src-1. Tyrosine phosphorylation is unc-6-dependent. Glycosylated via C-mannosylation by dpy-19 at Trp-305 and Trp-308. In terms of tissue distribution, expressed in cell bodies and axons of the VNC motor neurons that extend axons to the dorsal midline and within the ventral nerve cord. Expressed in gonadal distal tip cells (DTC).

It localises to the cell membrane. It is found in the membrane raft. The protein resides in the cell projection. Its subcellular location is the neuron projection. Receptor for netrin (unc-6) required for axon guidance. Mediates axon repulsion of neuronal growth cones in the developing nervous system upon ligand binding. Axon migration is mediated by the secreted unc-6, which promotes attraction of neurons and axons through binding to the unc-40 receptor, while repulsion requires both unc-5 and unc-40 receptors. Involved in the ventral-dorsal and anterior-posterior migration of distal tip cells along the body, which may be mediated by Wnt receptor mom-5, ced-10/Rac, ced-12/ELMO and mig-2/RhoG. This Caenorhabditis elegans protein is Netrin receptor unc-5.